The chain runs to 562 residues: IRK-interacting protein (562 aa).

Disordered stretches follow at residues A29–P61 and V303–P322. Over residues S36–P61 the composition is skewed to low complexity. Residues S246–Q306 are a coiled coil.

In terms of assembly, interacts with IRK. As to expression, highly expressed in root tips, shoot apices and developing flowers.

This Arabidopsis thaliana (Mouse-ear cress) protein is IRK-interacting protein.